The following is a 154-amino-acid chain: Crossover junction endodeoxyribonuclease RuvC (154 aa).

Residues D7, E67, and D139 contribute to the active site. Mg(2+)-binding residues include D7, E67, and D139.

Belongs to the RuvC family. Homodimer which binds Holliday junction (HJ) DNA. The HJ becomes 2-fold symmetrical on binding to RuvC with unstacked arms; it has a different conformation from HJ DNA in complex with RuvA. In the full resolvosome a probable DNA-RuvA(4)-RuvB(12)-RuvC(2) complex forms which resolves the HJ. The cofactor is Mg(2+).

Its subcellular location is the cytoplasm. The catalysed reaction is Endonucleolytic cleavage at a junction such as a reciprocal single-stranded crossover between two homologous DNA duplexes (Holliday junction).. In terms of biological role, the RuvA-RuvB-RuvC complex processes Holliday junction (HJ) DNA during genetic recombination and DNA repair. Endonuclease that resolves HJ intermediates. Cleaves cruciform DNA by making single-stranded nicks across the HJ at symmetrical positions within the homologous arms, yielding a 5'-phosphate and a 3'-hydroxyl group; requires a central core of homology in the junction. The consensus cleavage sequence is 5'-(A/T)TT(C/G)-3'. Cleavage occurs on the 3'-side of the TT dinucleotide at the point of strand exchange. HJ branch migration catalyzed by RuvA-RuvB allows RuvC to scan DNA until it finds its consensus sequence, where it cleaves and resolves the cruciform DNA. In Prochlorococcus marinus (strain NATL2A), this protein is Crossover junction endodeoxyribonuclease RuvC.